The sequence spans 407 residues: Histidine--tRNA ligase (407 aa).

It belongs to the class-II aminoacyl-tRNA synthetase family. As to quaternary structure, homodimer.

It localises to the cytoplasm. The enzyme catalyses tRNA(His) + L-histidine + ATP = L-histidyl-tRNA(His) + AMP + diphosphate + H(+). The chain is Histidine--tRNA ligase from Wolbachia pipientis subsp. Culex pipiens (strain wPip).